We begin with the raw amino-acid sequence, 238 residues long: Lipid transferase CIDEC (238 aa).

A required for liquid-liquid phase separation (LLPS) region spans residues 1–35 (MEYAMKSLSLLYPKSLSRHVSVRTSVVTQQLLSEP). A CIDE-N domain is found at 41-118 (RARPCRVSTA…VLQKGQKWQP (78 aa)).

Belongs to the CIDE family. Homodimer. Homooligomer; undergoes liquid-liquid phase separation (LLPS) via its N-terminus, facilitating lipid droplet fusion, occurs at the lipid droplet contact sites. Interacts with CIDEA. Interacts with PLIN1. Interacts with NFAT5; this interaction is direct and retains NFAT5 in the cytoplasm. Interacts with CEBPB. Interacts with isoform CLSTN3beta of CLSTN3; inhibiting the lipid transferase activity of CIDEC. In terms of processing, ubiquitinated and targeted to proteasomal degradation, resulting in a short half-life (about 15 minutes in 3T3-L1 cells). Protein stability depends on triaclyglycerol synthesis, fatty acid availability and lipid droplet formation. As to expression, expressed mainly in adipose tissue, small intestine, heart, colon and stomach and, at lower levels, in brain, kidney and liver.

It is found in the lipid droplet. The protein resides in the endoplasmic reticulum. Its subcellular location is the nucleus. It carries out the reaction a triacyl-sn-glycerol(in) = a triacyl-sn-glycerol(out). Functionally, lipid transferase specifically expressed in white adipose tissue, which promotes unilocular lipid droplet formation by mediating lipid droplet fusion. Lipid droplet fusion promotes their enlargement, restricting lipolysis and favoring lipid storage. Localizes on the lipid droplet surface, at focal contact sites between lipid droplets, and mediates atypical lipid droplet fusion by undergoing liquid-liquid phase separation (LLPS) and promoting directional net neutral lipid transfer from the smaller to larger lipid droplets. The transfer direction may be driven by the internal pressure difference between the contacting lipid droplet pair. Its role in neutral lipid transfer and lipid droplet enlargement is activated by the interaction with PLIN1. May also act as a CEBPB coactivator in the white adipose tissue to control the expression of a subset of CEBPB downstream target genes, including SOCS1, SOCS3, TGFB1, TGFBR1, ID2 and XDH. When overexpressed in preadipocytes, induces apoptosis or increases cell susceptibility to apoptosis induced by serum deprivation or TGFB treatment. In Homo sapiens (Human), this protein is Lipid transferase CIDEC.